The chain runs to 233 residues: 5'-methylthioadenosine/S-adenosylhomocysteine nucleosidase (233 aa).

Catalysis depends on glutamate 12, which acts as the Proton acceptor. Substrate-binding positions include glycine 78, isoleucine 153, and 174–175; that span reads ME. Aspartate 198 (proton donor) is an active-site residue.

Belongs to the PNP/UDP phosphorylase family. MtnN subfamily.

It carries out the reaction S-adenosyl-L-homocysteine + H2O = S-(5-deoxy-D-ribos-5-yl)-L-homocysteine + adenine. It catalyses the reaction S-methyl-5'-thioadenosine + H2O = 5-(methylsulfanyl)-D-ribose + adenine. The catalysed reaction is 5'-deoxyadenosine + H2O = 5-deoxy-D-ribose + adenine. It participates in amino-acid biosynthesis; L-methionine biosynthesis via salvage pathway; S-methyl-5-thio-alpha-D-ribose 1-phosphate from S-methyl-5'-thioadenosine (hydrolase route): step 1/2. In terms of biological role, catalyzes the irreversible cleavage of the glycosidic bond in both 5'-methylthioadenosine (MTA) and S-adenosylhomocysteine (SAH/AdoHcy) to adenine and the corresponding thioribose, 5'-methylthioribose and S-ribosylhomocysteine, respectively. Also cleaves 5'-deoxyadenosine, a toxic by-product of radical S-adenosylmethionine (SAM) enzymes, into 5-deoxyribose and adenine. The protein is 5'-methylthioadenosine/S-adenosylhomocysteine nucleosidase of Exiguobacterium sp. (strain ATCC BAA-1283 / AT1b).